The primary structure comprises 533 residues: Metal transporter nramp1 homolog (533 aa).

The disordered stretch occupies residues 1–33; that stretch reads MTPRIESEESAPLVNKNNNNNNDNNNNNNVDEE. Residues 1–68 are Cytoplasmic-facing; it reads MTPRIESEES…PNIDKPDSKW (68 aa). Positions 14–29 are enriched in low complexity; sequence VNKNNNNNNDNNNNNN. A helical membrane pass occupies residues 69-89; it reads INFKTLWAFTGPGFLMSIAYL. Over 90–101 the chain is Extracellular; it reads DPGNLESDIQAG. Residues 102–122 form a helical membrane-spanning segment; sequence AMAGYQLLWVLFWSTVIGFWL. Over 123–158 the chain is Cytoplasmic; the sequence is QMLASRLGVVTGKHLAEHCREQYPKTPRLLLWLMTE. Residues 159–179 form a helical membrane-spanning segment; that stretch reads LAIIGSDIQEVIGTAIALQIL. The Extracellular portion of the chain corresponds to 180–182; that stretch reads SNG. A helical transmembrane segment spans residues 183–203; it reads HIPLWAGVLFTAADTFTFLFL. Topologically, residues 204-212 are cytoplasmic; that stretch reads EKYGIRKLE. Residues 213–233 traverse the membrane as a helical segment; sequence AFFCSLIAIMAISFGVEYIIS. At 234–256 the chain is on the extracellular side; sequence KPDQIEVVKGVFIPLCSQNNISQ. N-linked (GlcNAc...) asparagine glycosylation occurs at asparagine 253. Residues 257–277 form a helical membrane-spanning segment; that stretch reads AVGILGAVVMPHNIYLHSALV. Residues 278 to 302 lie on the Cytoplasmic side of the membrane; sequence QSREIDRKSETQVKIANKYNRLESA. Residues 303–323 form a helical membrane-spanning segment; it reads FALIISFIINLLLVSVFAKGF. Residues 324–348 lie on the Extracellular side of the membrane; sequence YGETTEIGLSSAADFLMDKYGKVAK. The chain crosses the membrane as a helical span at residues 349-368; it reads YIWAIGLFSAGQCSTMTGTY. Over 369 to 387 the chain is Cytoplasmic; sequence SGQFVMEGFLKLKIAPWKR. A helical transmembrane segment spans residues 388–408; that stretch reads LLITRCTAIVPAMVVAILSTS. At 409 to 415 the chain is on the extracellular side; sequence HLDSLDQ. A helical membrane pass occupies residues 416-436; the sequence is WLNILQSIQLPFAVVPVLLFT. The Cytoplasmic portion of the chain corresponds to 437 to 457; the sequence is SSEKIMGSKFKNHWLNNQFVR. The chain crosses the membrane as a helical span at residues 458–478; sequence FLSLLIIAINIYLIITFSMQI. Residues 479-481 are Extracellular-facing; that stretch reads SES. The helical transmembrane segment at 482 to 502 threads the bilayer; sequence AWMISIVSISFFFYFIFIVYL. Topologically, residues 503–533 are cytoplasmic; sequence SMGQENFNSMTKKIKNLFNNNSNQTYNNINY.

This sequence belongs to the NRAMP family.

It is found in the membrane. Functionally, depletes iron from the phagolysosome in an ATP-dependent process. May rather act as a symporter of protons and metal cations in an ATP-dependent process. Nramp1 overexpression protected cells from L.pneumophila infection. In Dictyostelium discoideum (Social amoeba), this protein is Metal transporter nramp1 homolog (nramp1).